Reading from the N-terminus, the 226-residue chain is MRHFVVFLYMFLALSIPTAFAKKHIVTKKGNHQDITNDNEGENAEKKSATVAGAVIAGGELALKILTKILYEIGKIDRKIAIGVDNESGLKWTALNTYYKSGASDVTLPYEVENSKALLYTARKSKGPVARGAVGVLAYKMSSGNTLAVMFSVPFDYNLYSNWWNVKIYDGEKKADEKMYNELYNNNNPIKPSTWEKRDLGKDGLKLRGFMTSNGDAKLVIHIEKS.

The signal sequence occupies residues 1–21 (MRHFVVFLYMFLALSIPTAFA). Positions 22–45 (KKHIVTKKGNHQDITNDNEGENAE) are excised as a propeptide. Residues 50 to 59 (TVAGAVIAGG) are plays an important role in the hemolytic activity. The N-terminal region stretch occupies residues 58–77 (GGELALKILTKILYEIGKID). Residues S101, V134, S152, P154, Y180, and Y184 each contribute to the phosphocholine site. Positions 152–167 (SVPFDYNLYSNWWNVK) are trp-rich region, which is important for the binding to lipid membrane.

It belongs to the actinoporin family. Sea anemone subfamily. In terms of assembly, octamer or nonamer in membranes. Monomer in the soluble state.

The protein resides in the secreted. It localises to the nematocyst. Its subcellular location is the target cell membrane. Pore-forming protein that forms cations-selective hydrophilic pores of around 1 nm and causes cytolysis. Pore formation is a multi-step process that involves specific recognition of membrane sphingomyelin (but neither cholesterol nor phosphatidylcholine) using aromatic rich region and adjacent phosphocholine (POC) binding site, firm binding to the membrane (mainly driven by hydrophobic interactions) accompanied by the transfer of the N-terminal region to the lipid-water interface and finally pore formation after oligomerization of monomers. The polypeptide is DELTA-alicitoxin-Pse1b (Phyllodiscus semoni (Night anemone)).